The sequence spans 160 residues: tRNA (cytidine(34)-2'-O)-methyltransferase (160 aa).

Leu-78, Gly-100, Ile-120, and Ser-128 together coordinate S-adenosyl-L-methionine.

It belongs to the class IV-like SAM-binding methyltransferase superfamily. RNA methyltransferase TrmH family. TrmL subfamily. In terms of assembly, homodimer.

The protein resides in the cytoplasm. The catalysed reaction is cytidine(34) in tRNA + S-adenosyl-L-methionine = 2'-O-methylcytidine(34) in tRNA + S-adenosyl-L-homocysteine + H(+). It catalyses the reaction 5-carboxymethylaminomethyluridine(34) in tRNA(Leu) + S-adenosyl-L-methionine = 5-carboxymethylaminomethyl-2'-O-methyluridine(34) in tRNA(Leu) + S-adenosyl-L-homocysteine + H(+). Functionally, methylates the ribose at the nucleotide 34 wobble position in the two leucyl isoacceptors tRNA(Leu)(CmAA) and tRNA(Leu)(cmnm5UmAA). Catalyzes the methyl transfer from S-adenosyl-L-methionine to the 2'-OH of the wobble nucleotide. This chain is tRNA (cytidine(34)-2'-O)-methyltransferase, found in Beijerinckia indica subsp. indica (strain ATCC 9039 / DSM 1715 / NCIMB 8712).